We begin with the raw amino-acid sequence, 363 residues long: NAD(P)H-quinone oxidoreductase subunit 1, chloroplastic (363 aa).

The next 6 membrane-spanning stretches (helical) occupy residues 27–47 (VWLLIPIFILVLGIVIGVLVI), 104–124 (IAVIAILLSYLVIPFGYHLVL), 127–147 (LSIGVFLWIAISSIAPIGLLM), 248–268 (YSGIKFGLFYVASYLNLLVSS), 300–320 (VFGMTIGIFITLAKAYLFLFI), and 343–363 (FLLPISLGNLLLTTSFQLFSL).

It belongs to the complex I subunit 1 family. NDH is composed of at least 16 different subunits, 5 of which are encoded in the nucleus.

The protein localises to the plastid. It localises to the chloroplast thylakoid membrane. The enzyme catalyses a plastoquinone + NADH + (n+1) H(+)(in) = a plastoquinol + NAD(+) + n H(+)(out). The catalysed reaction is a plastoquinone + NADPH + (n+1) H(+)(in) = a plastoquinol + NADP(+) + n H(+)(out). NDH shuttles electrons from NAD(P)H:plastoquinone, via FMN and iron-sulfur (Fe-S) centers, to quinones in the photosynthetic chain and possibly in a chloroplast respiratory chain. The immediate electron acceptor for the enzyme in this species is believed to be plastoquinone. Couples the redox reaction to proton translocation, and thus conserves the redox energy in a proton gradient. The polypeptide is NAD(P)H-quinone oxidoreductase subunit 1, chloroplastic (Ranunculus macranthus (Large buttercup)).